A 365-amino-acid polypeptide reads, in one-letter code: Phospho-N-acetylmuramoyl-pentapeptide-transferase (365 aa).

The next 10 membrane-spanning stretches (helical) occupy residues 22–42 (YISVRIIMISITSLLITLALG), 74–94 (TMGGVLILSSVIISCLLWGNL), 95–115 (TSIYLWILILVVIFFGAIGFF), 134–154 (KFALQSIFSIVLAIVLFYLLS), 168–188 (SLYIPMGIVIFVVLAFFIING), 201–221 (GLAIVPVVLVAAGLGIYAYIE), 240–260 (LAEVAVFCAAVCGSGLAFLWF), 267–287 (VFMGDVGSLTLGAVLGVIAVM), 292–312 (LIFFIMGLLFVVEALSVMLQV), and 342–362 (KVVIRFWIISLILFLIGFAAI).

Belongs to the glycosyltransferase 4 family. MraY subfamily. Requires Mg(2+) as cofactor.

The protein resides in the cell inner membrane. It catalyses the reaction UDP-N-acetyl-alpha-D-muramoyl-L-alanyl-gamma-D-glutamyl-meso-2,6-diaminopimeloyl-D-alanyl-D-alanine + di-trans,octa-cis-undecaprenyl phosphate = di-trans,octa-cis-undecaprenyl diphospho-N-acetyl-alpha-D-muramoyl-L-alanyl-D-glutamyl-meso-2,6-diaminopimeloyl-D-alanyl-D-alanine + UMP. It functions in the pathway cell wall biogenesis; peptidoglycan biosynthesis. Catalyzes the initial step of the lipid cycle reactions in the biosynthesis of the cell wall peptidoglycan: transfers peptidoglycan precursor phospho-MurNAc-pentapeptide from UDP-MurNAc-pentapeptide onto the lipid carrier undecaprenyl phosphate, yielding undecaprenyl-pyrophosphoryl-MurNAc-pentapeptide, known as lipid I. In Francisella tularensis subsp. holarctica (strain OSU18), this protein is Phospho-N-acetylmuramoyl-pentapeptide-transferase.